Consider the following 65-residue polypeptide: Large ribosomal subunit protein uL29 (65 aa).

Belongs to the universal ribosomal protein uL29 family.

This is Large ribosomal subunit protein uL29 from Mycoplasmopsis pulmonis (strain UAB CTIP) (Mycoplasma pulmonis).